The following is a 444-amino-acid chain: Aflatoxin biosynthesis regulatory protein (444 aa).

A disordered region spans residues 1-26 (MVDHISPRASPGPIRSSQTRRARKLR). The zn(2)-C6 fungal-type DNA-binding region spans 29–56 (CTSCASSKVRCTKEKPACARCIERGLAC). The tract at residues 64–167 (MGRNPRAPSP…QGLGGDLAGQ (104 aa)) is disordered. Residues 106-116 (TQAHTHAHSHP) show a composition bias toward basic residues. Residues 120–130 (PQSHPQSNQPP) show a composition bias toward low complexity. The span at 136–149 (PNGSSSVSAIFSHQ) shows a compositional bias: polar residues.

The protein localises to the nucleus. It participates in mycotoxin biosynthesis; aflatoxin biosynthesis. Its function is as follows. Involved in the regulation of aflatoxin biosynthesis. May have a role in nitrate assimilation and sclerotial morphogenesis. The polypeptide is Aflatoxin biosynthesis regulatory protein (aflR) (Aspergillus parasiticus).